Here is a 93-residue protein sequence, read N- to C-terminus: Small ribosomal subunit protein uS19 (93 aa).

The protein belongs to the universal ribosomal protein uS19 family.

Protein S19 forms a complex with S13 that binds strongly to the 16S ribosomal RNA. This Karelsulcia muelleri (strain GWSS) (Sulcia muelleri) protein is Small ribosomal subunit protein uS19.